Reading from the N-terminus, the 195-residue chain is dITP/XTP pyrophosphatase (195 aa).

7 to 12 (SSNKGK) contributes to the substrate binding site. Mg(2+) contacts are provided by glutamate 38 and aspartate 68. Aspartate 68 serves as the catalytic Proton acceptor. Substrate contacts are provided by residues serine 69, 150–153 (FGYD), lysine 173, and 178–179 (HR).

The protein belongs to the HAM1 NTPase family. In terms of assembly, homodimer. The cofactor is Mg(2+).

The catalysed reaction is XTP + H2O = XMP + diphosphate + H(+). It carries out the reaction dITP + H2O = dIMP + diphosphate + H(+). It catalyses the reaction ITP + H2O = IMP + diphosphate + H(+). Pyrophosphatase that catalyzes the hydrolysis of nucleoside triphosphates to their monophosphate derivatives, with a high preference for the non-canonical purine nucleotides XTP (xanthosine triphosphate), dITP (deoxyinosine triphosphate) and ITP. Seems to function as a house-cleaning enzyme that removes non-canonical purine nucleotides from the nucleotide pool, thus preventing their incorporation into DNA/RNA and avoiding chromosomal lesions. The sequence is that of dITP/XTP pyrophosphatase from Nautilia profundicola (strain ATCC BAA-1463 / DSM 18972 / AmH).